Consider the following 800-residue polypeptide: Protein gfi-3 (800 aa).

Residues 346–366 (ESLQQAQLRNDEICHQMANIE) adopt a coiled-coil conformation. TPR repeat units follow at residues 526–559 (AIGA…YPEE) and 637–670 (IRIH…AENT).

The APC/C complex is probably composed of at least 12 subunits: apc-2, apc-10, apc-11, cdc-26, emb-1, emb-27, emb-30, mat-1, mat-2, mat-3, such-1 and gfi-3. Expressed in gut cells and mature sperm stored in the spermatheca.

It functions in the pathway protein modification; protein ubiquitination. Probable component of the anaphase promoting complex/cyclosome (APC/C), a cell cycle-regulated E3 ubiquitin ligase that controls progression through mitosis and the G1 phase of the cell cycle. The APC/C complex acts by mediating ubiquitination and subsequent degradation of target proteins. Required for the metaphase to anaphase transition in meiosis. The polypeptide is Protein gfi-3 (Caenorhabditis elegans).